The chain runs to 152 residues: Transcriptional regulator MraZ (152 aa).

SpoVT-AbrB domains are found at residues 5 to 52 and 81 to 124; these read ASAI…PIHE and AHEV…DEQA.

The protein belongs to the MraZ family. Forms oligomers.

The protein resides in the cytoplasm. It localises to the nucleoid. The polypeptide is Transcriptional regulator MraZ (Shewanella sp. (strain ANA-3)).